The following is a 547-amino-acid chain: Chaperonin GroEL (547 aa).

Residues Thr30 to Pro33, Lys51, Asp87 to Thr91, Gly415, Asn479 to Ala481, and Asp495 contribute to the ATP site.

The protein belongs to the chaperonin (HSP60) family. As to quaternary structure, forms a cylinder of 14 subunits composed of two heptameric rings stacked back-to-back. Interacts with the co-chaperonin GroES.

The protein localises to the cytoplasm. It catalyses the reaction ATP + H2O + a folded polypeptide = ADP + phosphate + an unfolded polypeptide.. Together with its co-chaperonin GroES, plays an essential role in assisting protein folding. The GroEL-GroES system forms a nano-cage that allows encapsulation of the non-native substrate proteins and provides a physical environment optimized to promote and accelerate protein folding. This is Chaperonin GroEL from Nitratidesulfovibrio vulgaris (strain ATCC 29579 / DSM 644 / CCUG 34227 / NCIMB 8303 / VKM B-1760 / Hildenborough) (Desulfovibrio vulgaris).